The sequence spans 157 residues: Glycine-rich RNA-binding protein (157 aa).

The RRM domain occupies 6–84; that stretch reads YRCFVGGLAW…RNITVNEAQS (79 aa). A disordered region spans residues 70–157; that stretch reads QELDGRNITV…YGGGGGGSRW (88 aa). Composition is skewed to gly residues over residues 86 to 138 and 145 to 157; these read GSGG…GGYG and DGGYGGGGGGSRW.

Its function is as follows. May play a role in the biosynthesis and processing of heterogeneous nuclear RNA and in the maturation of specific mRNAs in response to wounding. The sequence is that of Glycine-rich RNA-binding protein from Daucus carota (Wild carrot).